A 687-amino-acid chain; its full sequence is Phenylalanine aminomutase (L-beta-phenylalanine forming) (687 aa).

Tyrosine 80 (proton donor/acceptor) is an active-site residue. A cross-link (5-imidazolinone (Ala-Gly)) is located at residues 175 to 177 (ASG). Serine 176 bears the 2,3-didehydroalanine (Ser) mark. 7 residues coordinate (E)-cinnamate: asparagine 231, glutamine 319, arginine 325, asparagine 355, lysine 427, glutamate 455, and asparagine 458.

The protein belongs to the PAL/histidase family. Homodimer. Homotetramer, dimer of dimers. In terms of processing, contains an active site 4-methylidene-imidazol-5-one (MIO), which is formed autocatalytically by cyclization and dehydration of residues Ala-Ser-Gly.

It localises to the cytoplasm. It catalyses the reaction L-phenylalanine = L-beta-phenylalanine. The catalysed reaction is L-phenylalanine = (E)-cinnamate + NH4(+). It functions in the pathway alkaloid biosynthesis; taxol biosynthesis. The protein operates within phenylpropanoid metabolism; trans-cinnamate biosynthesis; trans-cinnamate from L-phenylalanine: step 1/1. Its function is as follows. Phenylalanine aminomutase that catalyzes the rearrangement of L-phenylalanine to R-beta-phenylalanine. Catalyzes the first committed step in the biosynthesis of the side chain of the alkaloid taxol (paclitaxel), a widely-used compound with antitumor activity. Also has low phenylalanine ammonia-lyase activity and can catalyze the amination of trans-cinnamate. The polypeptide is Phenylalanine aminomutase (L-beta-phenylalanine forming) (pam) (Taxus chinensis (Chinese yew)).